We begin with the raw amino-acid sequence, 709 residues long: Polyribonucleotide nucleotidyltransferase (709 aa).

Residues aspartate 491 and aspartate 497 each coordinate Mg(2+). One can recognise a KH domain in the interval 557 to 617 (PKSESFMIPP…ENLQKAKTFI (61 aa)). The region spanning 641 to 709 (GERFVGKIKK…KNKVELGLVE (69 aa)) is the S1 motif domain.

This sequence belongs to the polyribonucleotide nucleotidyltransferase family. Requires Mg(2+) as cofactor.

The protein resides in the cytoplasm. The catalysed reaction is RNA(n+1) + phosphate = RNA(n) + a ribonucleoside 5'-diphosphate. Its function is as follows. Involved in mRNA degradation. Catalyzes the phosphorolysis of single-stranded polyribonucleotides processively in the 3'- to 5'-direction. In Helicobacter hepaticus (strain ATCC 51449 / 3B1), this protein is Polyribonucleotide nucleotidyltransferase.